We begin with the raw amino-acid sequence, 137 residues long: Large ribosomal subunit protein uL16 (137 aa).

This sequence belongs to the universal ribosomal protein uL16 family. As to quaternary structure, part of the 50S ribosomal subunit.

Functionally, binds 23S rRNA and is also seen to make contacts with the A and possibly P site tRNAs. The protein is Large ribosomal subunit protein uL16 of Azorhizobium caulinodans (strain ATCC 43989 / DSM 5975 / JCM 20966 / LMG 6465 / NBRC 14845 / NCIMB 13405 / ORS 571).